The sequence spans 292 residues: Non-homologous end joining protein Ku (292 aa).

The region spanning 9 to 187 (ITFGLVNVPV…TVPPITEREL (179 aa)) is the Ku domain. Residues 264–285 (AASAFPAAEKAPAGKNAATASA) show a composition bias toward low complexity. The tract at residues 264–292 (AASAFPAAEKAPAGKNAATASAKKARKLA) is disordered.

This sequence belongs to the prokaryotic Ku family. As to quaternary structure, homodimer. Interacts with LigD.

Its function is as follows. With LigD forms a non-homologous end joining (NHEJ) DNA repair enzyme, which repairs dsDNA breaks with reduced fidelity. Binds linear dsDNA with 5'- and 3'- overhangs but not closed circular dsDNA nor ssDNA. Recruits and stimulates the ligase activity of LigD. This chain is Non-homologous end joining protein Ku, found in Leifsonia xyli subsp. xyli (strain CTCB07).